The primary structure comprises 304 residues: Oxygen-dependent coproporphyrinogen-III oxidase (304 aa).

Position 93 (S93) interacts with substrate. Residues H97 and H107 each contribute to the a divalent metal cation site. The active-site Proton donor is the H107. 109–111 lines the substrate pocket; the sequence is NVR. The a divalent metal cation site is built by H146 and H176. An important for dimerization region spans residues 241–276; sequence YVEFNLVYDRGTLFGLQSGGRTESILMSLPPQVRWA. 259–261 contributes to the substrate binding site; sequence GGR.

The protein belongs to the aerobic coproporphyrinogen-III oxidase family. In terms of assembly, homodimer. The cofactor is a divalent metal cation.

It localises to the cytoplasm. The enzyme catalyses coproporphyrinogen III + O2 + 2 H(+) = protoporphyrinogen IX + 2 CO2 + 2 H2O. The protein operates within porphyrin-containing compound metabolism; protoporphyrin-IX biosynthesis; protoporphyrinogen-IX from coproporphyrinogen-III (O2 route): step 1/1. In terms of biological role, involved in the heme biosynthesis. Catalyzes the aerobic oxidative decarboxylation of propionate groups of rings A and B of coproporphyrinogen-III to yield the vinyl groups in protoporphyrinogen-IX. The protein is Oxygen-dependent coproporphyrinogen-III oxidase of Pseudomonas fluorescens (strain Pf0-1).